We begin with the raw amino-acid sequence, 436 residues long: Hydrogenobyrinate a,c-diamide synthase (436 aa).

The GATase cobBQ-type domain occupies 244–435 (RIAVARDDAF…MHVIDFSGEA (192 aa)). The Nucleophile role is filled by Cys327.

Belongs to the CobB/CbiA family. It depends on Mg(2+) as a cofactor.

The enzyme catalyses hydrogenobyrinate + 2 L-glutamine + 2 ATP + 2 H2O = hydrogenobyrinate a,c-diamide + 2 L-glutamate + 2 ADP + 2 phosphate + 2 H(+). The protein operates within cofactor biosynthesis; adenosylcobalamin biosynthesis; cob(II)yrinate a,c-diamide from precorrin-2 (aerobic route): step 9/10. Its function is as follows. Catalyzes the ATP-dependent amidation of the two carboxylate groups at positions a and c of hydrogenobyrinate, using either L-glutamine or ammonia as the nitrogen source. The protein is Hydrogenobyrinate a,c-diamide synthase of Brucella suis biovar 1 (strain 1330).